An 87-amino-acid polypeptide reads, in one-letter code: Neurotoxin LmNaTx64.1 (87 aa).

A signal peptide spans 1–18 (MKILFLIILTAFFIGVHC). The 67-residue stretch at 19–85 (KHGYPIIRAG…TWSRATNKCK (67 aa)) folds into the LCN-type CS-alpha/beta domain. 4 disulfide bridges follow: C33–C84, C37–C58, C44–C65, and C48–C67. Residue C84 is modified to Cysteine amide.

Belongs to the long (4 C-C) scorpion toxin superfamily. Sodium channel inhibitor family. Beta subfamily. As to expression, expressed by the venom gland.

It localises to the secreted. Functionally, binds voltage-independently at site-4 of sodium channels (Nav) and shift the voltage of activation toward more negative potentials thereby affecting sodium channel activation and promoting spontaneous and repetitive firing. The polypeptide is Neurotoxin LmNaTx64.1 (Lychas mucronatus (Chinese swimming scorpion)).